The primary structure comprises 301 residues: Bifunctional protein FolD (301 aa).

Residues 164 to 166 (GRS), S191, and I232 each bind NADP(+).

It belongs to the tetrahydrofolate dehydrogenase/cyclohydrolase family. In terms of assembly, homodimer.

It carries out the reaction (6R)-5,10-methylene-5,6,7,8-tetrahydrofolate + NADP(+) = (6R)-5,10-methenyltetrahydrofolate + NADPH. It catalyses the reaction (6R)-5,10-methenyltetrahydrofolate + H2O = (6R)-10-formyltetrahydrofolate + H(+). It functions in the pathway one-carbon metabolism; tetrahydrofolate interconversion. Its function is as follows. Catalyzes the oxidation of 5,10-methylenetetrahydrofolate to 5,10-methenyltetrahydrofolate and then the hydrolysis of 5,10-methenyltetrahydrofolate to 10-formyltetrahydrofolate. The protein is Bifunctional protein FolD of Borrelia garinii subsp. bavariensis (strain ATCC BAA-2496 / DSM 23469 / PBi) (Borreliella bavariensis).